The chain runs to 470 residues: Box C/D snoRNA protein 1 (470 aa).

The disordered stretch occupies residues 1–70 (MEFAAENEGK…EEGSGQRPEE (70 aa)). The residue at position 25 (Ser25) is a Phosphoserine. Positions 41-51 (EFGGGEEGTGL) are enriched in gly residues. Residues Lys79, Lys108, Lys118, Lys138, Lys143, Lys153, Lys162, Lys173, Lys183, and Lys200 each participate in a glycyl lysine isopeptide (Lys-Gly) (interchain with G-Cter in SUMO2) cross-link. Residues Cys220, Cys223, Cys232, Cys235, Cys240, Cys244, His248, and Cys254 each coordinate Zn(2+). An HIT-type zinc finger spans residues 220 to 254 (CETCGTEEAKYRCPRCMRYSCSLPCVKKHKAELTC). Residue Lys459 forms a Glycyl lysine isopeptide (Lys-Gly) (interchain with G-Cter in SUMO2) linkage.

Belongs to the BCD1 family. In terms of assembly, interacts with FBL, SNU13, NOP58, NUFIP1, RUVBL1, RUVBL2 and TAF9. Interacts (via HIT-type zinc finger) with the RUVBL1/RUVBL2 complex in the presence of ADP.

In terms of biological role, required for box C/D snoRNAs accumulation involved in snoRNA processing, snoRNA transport to the nucleolus and ribosome biogenesis. This chain is Box C/D snoRNA protein 1 (ZNHIT6), found in Homo sapiens (Human).